The following is a 2572-amino-acid chain: Highly reducing polyketide synthase phiA (2572 aa).

Positions 11 to 438 constitute a Ketosynthase family 3 (KS3) domain; it reads IMPIAVVGMS…GANAHVIIES (428 aa). Catalysis depends on for beta-ketoacyl synthase activity residues C186, H321, and H361. The Malonyl-CoA:ACP transacylase (MAT) domain maps to 591-917; it reads FVFTGQGAQW…HTALARKKDA (327 aa). An N-terminal hotdog fold region spans residues 983-1120; it reads VDLLGVLERN…GLISVQTPQK (138 aa). In terms of domain architecture, PKS/mFAS DH spans 983–1307; the sequence is VDLLGVLERN…CATLERDGGG (325 aa). Residue H1015 is the Proton acceptor; for dehydratase activity of the active site. The tract at residues 1150–1307 is C-terminal hotdog fold; sequence RKEIDVSQFY…CATLERDGGG (158 aa). D1215 serves as the catalytic Proton donor; for dehydratase activity. Residues 1353–1654 form a methyltransferase (CMeT) domain region; the sequence is LERAAFYYLH…LSSSTNKTNY (302 aa). An Enoyl reductase (ER) domain is found at 1870 to 2182; it reads GLLDTLHFTE…TGGHMGKLVA (313 aa). The region spanning 2206-2383 is the Ketoreductase (KR) domain; the sequence is ASYLLVGGLG…ATTLDLGAIS (178 aa). One can recognise a Carrier domain in the interval 2484–2561; the sequence is AASEAICDAL…GLAAKIAKRS (78 aa). The residue at position 2521 (S2521) is an O-(pantetheine 4'-phosphoryl)serine.

It depends on pantetheine 4'-phosphate as a cofactor.

It functions in the pathway secondary metabolite biosynthesis. In terms of biological role, highly reducing polyketide synthase; part of the gene cluster that mediates the biosynthesis of the antihypercholesterolemic agents phomoidrides which are dimeric anhydrides. The pathway begins with the highly reducing polyketide synthase phiA that catalyzes the formation of a C12-fatty acyl-ACP, starting from one acetate and 5 malonate units. The hydrolase phiM is involved in the release of the C12-fatty acyl chain from phiA. The alkylcitrate synthase (ACS) phiJ and the alkylcitrate dehydratase (ACDH) phiI then give rise to decarboxylated monomeric anhydrides by coupling the C12-fatty acyl chain with oxalacetic acid. The cyclase phiC is responsible for the dimerization of the monomeric anhydrides which leads to the production of prephomoidride that contains the characteristic bicyclo[4.3.1]deca-1,6-diene system of phomoidrides. Iterative oxidation catalyzed by the alpha-ketoglutarate-dependent dioxygenase phiK produced then phomoidride A. Finally, the methyltransferase phiE converts phomoidride A to phomoidride B via an acetalization reaction. The phosphatidylethanolamine-binding protein phiB and phiN are not essential for dimerization and their functions have still to be determined. The polypeptide is Highly reducing polyketide synthase phiA (Fungal sp. (strain ATCC 74256)).